Here is a 761-residue protein sequence, read N- to C-terminus: MSVQKMMWVPRKMVGGRIPFFTCSKVFSGFSRRSFHESPLARSTYEEEKVLVDEIKQKLTPDDIGRCNKLRNIGISAHIDSGKTTFTERVLYYTKRIKAIHEVRGRDNVGAKMDSMDLEREKGITIQSAATYCSWDKEGKNYHFNLIDTPGHIDFTIEVERALRVLDGAVLVVCAVSGVQSQTVTVDRQMRRYNVPRVTFINKMDRMGSDPFRAIEQLNSKLKIPAAAVQIPIGSESSLSGVVDLINRVAIYNKGDNGEIIEKGPVPENLKPLMEEKRQLLIETLADVDDEMAEMFLEEKEPTTQQIKDAIRRSTIARSFTPVLMGSALANTGIQPVLDAIVDYLPNPSEVLNTALDVSNNEAKVNLVPAVQQPFVGLAFKLEEGKYGQLTYVRVYQGRLRKGNYITNVKTGKKVKVARLVRMHSSEMEDVDEVGSGEICATFGIDCASGDTFTDGSVQYSMSSMYVPDAVVSLSITPNSKDASNFSKALNRFQKEDPTFRVKFDPESKETIISGMGELHLEIYVERMRREYNVDCVTGKPQVSYRESITIPADFDYTHKKQSGGAGQYGRVIGTLSPVDDITKGNIFETAIVGGRIPDKYLAACGKGFEEVCEKGPLIGHRVLDVKMLINDGAIHAVDSNELSFKTATMSAFRDAFLRAQPVIMEPIMNVSVTSPNEFQGNVIGLLNKLQAVIQDTENGHDEFTLKAECALSTMFGFATSLRASTQGKGEFSLEFSHYAPTAPHVQKELISEFQKKQAKK.

Residues 1-42 (MSVQKMMWVPRKMVGGRIPFFTCSKVFSGFSRRSFHESPLAR) constitute a mitochondrion transit peptide. Positions 68 to 349 (NKLRNIGISA…AIVDYLPNPS (282 aa)) constitute a tr-type G domain. GTP contacts are provided by residues 77-84 (AHIDSGKT), 148-152 (DTPGH), and 202-205 (NKMD).

This sequence belongs to the TRAFAC class translation factor GTPase superfamily. Classic translation factor GTPase family. EF-G/EF-2 subfamily. Post-translationally, the precursor is processed in two steps involving mitochondrial intermediate peptidase (MIP) and mitochondrial processing peptidase (MPP).

The protein localises to the mitochondrion. Its pathway is protein biosynthesis; polypeptide chain elongation. In terms of biological role, mitochondrial GTPase that catalyzes the GTP-dependent ribosomal translocation step during translation elongation. During this step, the ribosome changes from the pre-translocational (PRE) to the post-translocational (POST) state as the newly formed A-site-bound peptidyl-tRNA and P-site-bound deacylated tRNA move to the P and E sites, respectively. Catalyzes the coordinated movement of the two tRNA molecules, the mRNA and conformational changes in the ribosome. This chain is Elongation factor G, mitochondrial, found in Saccharomyces cerevisiae (strain ATCC 204508 / S288c) (Baker's yeast).